A 1087-amino-acid chain; its full sequence is Error-prone DNA polymerase 3 (1087 aa).

The segment at 1040-1064 is disordered; sequence AGRGDEFAHGSPGSSDTRDKSKPVV.

The protein belongs to the DNA polymerase type-C family. DnaE2 subfamily.

It is found in the cytoplasm. The catalysed reaction is DNA(n) + a 2'-deoxyribonucleoside 5'-triphosphate = DNA(n+1) + diphosphate. Its function is as follows. DNA polymerase involved in damage-induced mutagenesis and translesion synthesis (TLS). It is not the major replicative DNA polymerase. The chain is Error-prone DNA polymerase 3 from Agrobacterium fabrum (strain C58 / ATCC 33970) (Agrobacterium tumefaciens (strain C58)).